A 214-amino-acid chain; its full sequence is Proteasome subunit beta type-6 (214 aa).

The propeptide at 1 to 14 is removed in mature form; it reads MEAPEWLDNAVDLG. Residue Thr15 is the Nucleophile of the active site.

Belongs to the peptidase T1B family. The 26S proteasome consists of a 20S proteasome core and two 19S regulatory subunits. The 20S proteasome core is composed of 28 subunits that are arranged in four stacked rings, resulting in a barrel-shaped structure. The two end rings are each formed by seven alpha subunits, and the two central rings are each formed by seven beta subunits. The catalytic chamber with the active sites is on the inside of the barrel.

The protein resides in the cytoplasm. Its subcellular location is the nucleus. The catalysed reaction is Cleavage of peptide bonds with very broad specificity.. Its function is as follows. The proteasome is a multicatalytic proteinase complex which is characterized by its ability to cleave peptides with Arg, Phe, Tyr, Leu, and Glu adjacent to the leaving group at neutral or slightly basic pH. The proteasome has an ATP-dependent proteolytic activity. The chain is Proteasome subunit beta type-6 (psmB6) from Dictyostelium discoideum (Social amoeba).